The sequence spans 740 residues: Catalase-peroxidase (740 aa).

Positions 1–14 (MTENHDAIVTDAKS) are enriched in basic and acidic residues. The interval 1-21 (MTENHDAIVTDAKSEGSGGCP) is disordered. The tryptophyl-tyrosyl-methioninium (Trp-Tyr) (with M-257) cross-link spans 108-231 (WHSAGTYRIS…LGAVQMGLIY (124 aa)). Catalysis depends on H109, which acts as the Proton acceptor. The segment at residues 231–257 (YVNPEGPNGNPDPIAAARDIRETFRRM) is a cross-link (tryptophyl-tyrosyl-methioninium (Tyr-Met) (with W-108)). H272 is a heme b binding site.

It belongs to the peroxidase family. Peroxidase/catalase subfamily. As to quaternary structure, homodimer. Heme b serves as cofactor. Formation of the three residue Trp-Tyr-Met cross-link is important for the catalase, but not the peroxidase activity of the enzyme.

It carries out the reaction H2O2 + AH2 = A + 2 H2O. The enzyme catalyses 2 H2O2 = O2 + 2 H2O. Its function is as follows. Bifunctional enzyme with both catalase and broad-spectrum peroxidase activity. The chain is Catalase-peroxidase from Streptomyces reticuli.